The following is a 597-amino-acid chain: Protein kinase C-like 3 (597 aa).

One can recognise a PB1 domain in the interval 12 to 95; sequence DIKLKTRFHG…AELNIHVFVG (84 aa). Residues 127–177 form a Phorbol-ester/DAG-type zinc finger; it reads GHRFQGKRLNRRIQCFICHDYIWGIGRQGFRCVDCRLCVHKKCHRHVRTHC. Positions 181–238 are disordered; it reads PQGPNVPVAPSSGVGSLRGGRLDTSSSTTRSGGGIDNGAFHEHEIESPGSAKDMSRST. Residues 253 to 522 form the Protein kinase domain; it reads FRLLTVIGRG…LNDMKEHDFF (270 aa). ATP contacts are provided by residues 259 to 267 and Lys-282; that span reads IGRGSYAKV. The active-site Proton acceptor is Asp-377. An AGC-kinase C-terminal domain is found at 524-595; the sequence is GFIDWEALEQ…VNPLQMSRED (72 aa).

The protein belongs to the protein kinase superfamily. AGC Ser/Thr protein kinase family. PKC subfamily. In terms of assembly, interaction with par-3 required for the peripheral localization of par-6 and to form a par-3/par-6/pkc-3 complex, which is activated when cdc-42 interacts with par-6. Binds avidly to the phosphotyrosine interaction domain (PID) of a novel pkc-3 adapter protein num-1, which enables tethering and targeting of pkc-3 to the cell periphery. The cofactor is Mg(2+).

The protein resides in the cytoplasm. It is found in the cytoskeleton. The catalysed reaction is L-seryl-[protein] + ATP = O-phospho-L-seryl-[protein] + ADP + H(+). It catalyses the reaction L-threonyl-[protein] + ATP = O-phospho-L-threonyl-[protein] + ADP + H(+). Functionally, required for the normal progression of embryogenesis and viability of the organism. Plays an indispensable role in establishing embryonic polarity and in recruiting and maintaining par-6 to the periphery, through interaction with par-3. Required for epithelial cell polarity in the distal spermatheca. Phosphorylates serine residues of num-1. Required for the expression of antimicrobial peptide nlp-29 in response in response to fungal infection or physical injury. The protein is Protein kinase C-like 3 of Caenorhabditis briggsae.